An 804-amino-acid polypeptide reads, in one-letter code: Ribonucleoside-diphosphate reductase large subunit (804 aa).

The 92-residue stretch at 1 to 92 folds into the ATP-cone domain; it reads MYVLNRKGEE…TDNLHKNTSD (92 aa). Residues 5 to 6, 11 to 17, Thr-53, and Asp-57 contribute to the ATP site; these read NR and EDISFDQ. Residue Ser-216 participates in GDP binding. Cysteines 217 and 442 form a disulfide. DTTP contacts are provided by residues 225–227, Lys-242, Arg-255, and 262–263; these read DSI and RG. Asn-425 is a binding site for GDP. Residue Asn-425 is the Proton acceptor of the active site. Cys-427 serves as the catalytic Cysteine radical intermediate. Residues Glu-429 and 603–606 contribute to the GDP site; that span reads TAST. Catalysis depends on Glu-429, which acts as the Proton acceptor.

It belongs to the ribonucleoside diphosphate reductase large chain family. Heterodimer of a large and a small subunit.

The catalysed reaction is a 2'-deoxyribonucleoside 5'-diphosphate + [thioredoxin]-disulfide + H2O = a ribonucleoside 5'-diphosphate + [thioredoxin]-dithiol. Its activity is regulated as follows. Under complex allosteric control mediated by deoxynucleoside triphosphates and ATP binding to separate specificity and activation sites on the large subunit. The type of nucleotide bound at the specificity site determines substrate preference. It seems probable that ATP makes the enzyme reduce CDP and UDP, dGTP favors ADP reduction and dTTP favors GDP reduction. Stimulated by ATP and inhibited by dATP binding to the activity site. Functionally, provides the precursors necessary for DNA synthesis. Catalyzes the biosynthesis of deoxyribonucleotides from the corresponding ribonucleotides. This chain is Ribonucleoside-diphosphate reductase large subunit (RNR1), found in Plasmodium falciparum (isolate FCR-3 / Gambia).